Consider the following 570-residue polypeptide: Sulfite reductase [NADPH] hemoprotein beta-component (570 aa).

Residues Cys434, Cys440, Cys479, and Cys483 each coordinate [4Fe-4S] cluster. Cys483 is a siroheme binding site.

This sequence belongs to the nitrite and sulfite reductase 4Fe-4S domain family. Alpha(8)-beta(8). The alpha component is a flavoprotein, the beta component is a hemoprotein. Siroheme is required as a cofactor. It depends on [4Fe-4S] cluster as a cofactor.

It carries out the reaction hydrogen sulfide + 3 NADP(+) + 3 H2O = sulfite + 3 NADPH + 4 H(+). It participates in sulfur metabolism; hydrogen sulfide biosynthesis; hydrogen sulfide from sulfite (NADPH route): step 1/1. Its function is as follows. Component of the sulfite reductase complex that catalyzes the 6-electron reduction of sulfite to sulfide. This is one of several activities required for the biosynthesis of L-cysteine from sulfate. The chain is Sulfite reductase [NADPH] hemoprotein beta-component from Salmonella typhi.